The primary structure comprises 598 residues: NADH-ubiquinone oxidoreductase chain 5 (598 aa).

The next 14 membrane-spanning stretches (helical) occupy residues 6–26 (LTLI…PPII), 32–52 (MILT…PLTI), 84–100 (YTVI…WSIM), 113–133 (MDKF…FISA), 136–156 (LLQL…LISW), 241–261 (TPVS…FLLI), 272–292 (LMLE…ALCA), 301–320 (IIAF…VGLN), 325–347 (AFLH…GSII), 370–390 (TTCM…AGFF), 409–429 (LMVT…LIIM), 456–476 (LAWG…PMKP), 478–498 (IFTM…ISLI), and 576–596 (LNSA…LSLT).

The protein belongs to the complex I subunit 5 family.

It localises to the mitochondrion inner membrane. The catalysed reaction is a ubiquinone + NADH + 5 H(+)(in) = a ubiquinol + NAD(+) + 4 H(+)(out). Functionally, core subunit of the mitochondrial membrane respiratory chain NADH dehydrogenase (Complex I) that is believed to belong to the minimal assembly required for catalysis. Complex I functions in the transfer of electrons from NADH to the respiratory chain. The immediate electron acceptor for the enzyme is believed to be ubiquinone. In Petromyzon marinus (Sea lamprey), this protein is NADH-ubiquinone oxidoreductase chain 5 (MT-ND5).